The following is a 244-amino-acid chain: MRIDILTLFPGMFSGVLSESILKKAQEKGAVDIRLIDFREFADNKHKTVDDYPYGGGAGMVLKPQPIFDAVEHVTAGSPGARIILLCPQGERYTQKKAEELAKETHLVLICGHYEGYDERIRQYLATDEISIGDYILTGGELGAMVIVDSVVRLLPGVLGNEASPVDDSFSSGLLEYPQYTRPADFRGMKVPDILLSGNHQLIAEWREKESLRRTFLRRPDLLDEYPLTDKQKQWLKEWEKERE.

S-adenosyl-L-methionine-binding positions include glycine 112 and 132–137 (IGDYIL).

This sequence belongs to the RNA methyltransferase TrmD family. In terms of assembly, homodimer.

It is found in the cytoplasm. The enzyme catalyses guanosine(37) in tRNA + S-adenosyl-L-methionine = N(1)-methylguanosine(37) in tRNA + S-adenosyl-L-homocysteine + H(+). In terms of biological role, specifically methylates guanosine-37 in various tRNAs. The sequence is that of tRNA (guanine-N(1)-)-methyltransferase from Geobacillus kaustophilus (strain HTA426).